The chain runs to 276 residues: Aliphatic sulfonates import ATP-binding protein SsuB 1 (276 aa).

The segment at 1-21 (MSTGNVTTLRRPEAPPSLPAG) is disordered. The region spanning 39–259 (FSFRNVTKSF…RHGTPEFARL (221 aa)) is the ABC transporter domain. 71-78 (GKSGCGKS) serves as a coordination point for ATP.

The protein belongs to the ABC transporter superfamily. Aliphatic sulfonates importer (TC 3.A.1.17.2) family. The complex is composed of two ATP-binding proteins (SsuB), two transmembrane proteins (SsuC) and a solute-binding protein (SsuA).

The protein localises to the cell inner membrane. The catalysed reaction is ATP + H2O + aliphatic sulfonate-[sulfonate-binding protein]Side 1 = ADP + phosphate + aliphatic sulfonateSide 2 + [sulfonate-binding protein]Side 1.. Its function is as follows. Part of the ABC transporter complex SsuABC involved in aliphatic sulfonates import. Responsible for energy coupling to the transport system. The sequence is that of Aliphatic sulfonates import ATP-binding protein SsuB 1 from Agrobacterium fabrum (strain C58 / ATCC 33970) (Agrobacterium tumefaciens (strain C58)).